The sequence spans 649 residues: Phospholipase A1 PLIP1, chloroplastic (649 aa).

The transit peptide at 1-67 (MAFNTAMAST…NNRILAVSVR (67 aa)) directs the protein to the chloroplast. Positions 420 to 424 (GHSLG) match the GXSXG motif. Residue serine 422 is the Acyl-ester intermediate of the active site. Catalysis depends on charge relay system residues aspartate 483 and histidine 593.

It belongs to the AB hydrolase superfamily. Lipase family.

It is found in the plastid. Its subcellular location is the chloroplast thylakoid membrane. The enzyme catalyses a 1,2-diacyl-sn-glycero-3-phosphocholine + H2O = a 2-acyl-sn-glycero-3-phosphocholine + a fatty acid + H(+). The catalysed reaction is a 1,2-diacyl-3-O-(beta-D-galactosyl)-sn-glycerol + 2 H2O = 3-beta-D-galactosyl-sn-glycerol + 2 a fatty acid + 2 H(+). Sn-1-specific phospholipase A1 involved in seed oil biosynthesis. Hydrolyzes polyunsaturated acyl groups from a unique chloroplast-specific phosphatidylglycerol (PG) that contains 16:1 delta 3-trans as its second acyl group. The polyunsaturated acyl groups released by PLIP1 are exported from the chloroplast, reincorporated into phosphatidylcholine (PC), and ultimately enter seed triacylglycerol (TAG). In vitro, possesses broad substrate specificity. Can hydrolyze the galactolipid monogalactosyldiacylglycerol (MGDG), and the phoshpolipids phosphatidylcholine (PC), phosphatidylethanolamine (PE), phosphatidic acid (PA), phosphatidylserine (PS) phosphatidylglycerol (PG) and phosphatidylinositol (PI). This is Phospholipase A1 PLIP1, chloroplastic from Arabidopsis thaliana (Mouse-ear cress).